Consider the following 312-residue polypeptide: Acetyl-coenzyme A carboxylase carboxyl transferase subunit alpha (312 aa).

The CoA carboxyltransferase C-terminal domain maps to 36 to 286; it reads NLEKEISKTY…ADYVKKSLNE (251 aa).

This sequence belongs to the AccA family. In terms of assembly, acetyl-CoA carboxylase is a heterohexamer composed of biotin carboxyl carrier protein (AccB), biotin carboxylase (AccC) and two subunits each of ACCase subunit alpha (AccA) and ACCase subunit beta (AccD).

It is found in the cytoplasm. It carries out the reaction N(6)-carboxybiotinyl-L-lysyl-[protein] + acetyl-CoA = N(6)-biotinyl-L-lysyl-[protein] + malonyl-CoA. It participates in lipid metabolism; malonyl-CoA biosynthesis; malonyl-CoA from acetyl-CoA: step 1/1. Its function is as follows. Component of the acetyl coenzyme A carboxylase (ACC) complex. First, biotin carboxylase catalyzes the carboxylation of biotin on its carrier protein (BCCP) and then the CO(2) group is transferred by the carboxyltransferase to acetyl-CoA to form malonyl-CoA. This chain is Acetyl-coenzyme A carboxylase carboxyl transferase subunit alpha, found in Campylobacter jejuni subsp. jejuni serotype O:23/36 (strain 81-176).